The sequence spans 279 residues: Oxygen-dependent coproporphyrinogen-III oxidase (279 aa).

Position 102 (Ser102) interacts with substrate. Residues His106 and His116 each coordinate a divalent metal cation. His116 acts as the Proton donor in catalysis. Residue 118–120 (NTR) coordinates substrate. A divalent metal cation-binding residues include His149 and His179. The tract at residues 244–279 (YVEFNLLYDRGTKFGLMTDGNVEAILMSLPPEVKWA) is important for dimerization.

It belongs to the aerobic coproporphyrinogen-III oxidase family. Homodimer. The cofactor is a divalent metal cation.

It is found in the cytoplasm. It catalyses the reaction coproporphyrinogen III + O2 + 2 H(+) = protoporphyrinogen IX + 2 CO2 + 2 H2O. Its pathway is porphyrin-containing compound metabolism; protoporphyrin-IX biosynthesis; protoporphyrinogen-IX from coproporphyrinogen-III (O2 route): step 1/1. Involved in the heme biosynthesis. Catalyzes the aerobic oxidative decarboxylation of propionate groups of rings A and B of coproporphyrinogen-III to yield the vinyl groups in protoporphyrinogen-IX. This is Oxygen-dependent coproporphyrinogen-III oxidase from Rickettsia bellii (strain OSU 85-389).